The following is a 291-amino-acid chain: Glycine--tRNA ligase alpha subunit (291 aa).

The protein belongs to the class-II aminoacyl-tRNA synthetase family. In terms of assembly, tetramer of two alpha and two beta subunits.

It is found in the cytoplasm. The enzyme catalyses tRNA(Gly) + glycine + ATP = glycyl-tRNA(Gly) + AMP + diphosphate. This is Glycine--tRNA ligase alpha subunit from Coprothermobacter proteolyticus (strain ATCC 35245 / DSM 5265 / OCM 4 / BT).